A 175-amino-acid polypeptide reads, in one-letter code: MRLPGRHVLYALSAVTMLAACSSNGARGGIASTNMNPTNPPATAETATVSPTPAPQSARTETWINLQVGDCLADLPPADLSRITVTIVDCATAHSAEVYLRAPVAVDAAVVSMANRDCAAGFAPYTGQSVDTSPYSVAYLIDSHQDRTGADPTPSTVICLLQPANGQLLTGSARR.

The signal sequence occupies residues 1-20 (MRLPGRHVLYALSAVTMLAA). Cys21 carries the N-palmitoyl cysteine lipid modification. The S-diacylglycerol cysteine moiety is linked to residue Cys21. Residues 31–56 (ASTNMNPTNPPATAETATVSPTPAPQ) form a disordered region. Over residues 33-48 (TNMNPTNPPATAETAT) the composition is skewed to low complexity. Prevents bacterial uptake by a human macrophage-like cell line regions lie at residues 61 to 80 (ETWI…PADL), 101 to 120 (RAPV…DCAA), and 121 to 140 (GFAP…VAYL).

The protein resides in the cell membrane. Its subcellular location is the cell surface. Functionally, probably involved in bacterial recognition and uptake by its host (human). This Mycobacterium tuberculosis (strain ATCC 25618 / H37Rv) protein is Putative lipoprotein LppN (lppN).